The following is a 505-amino-acid chain: MLRGNDTGSDLAELLWDNGAPAPLRPPPPPPFQPFTCSAAATTSPPAHDYLFIKNLMRGGGAANHHHHDDDDDDDDDVPWLHYHPVVDDDDDADADTAPLPPDYCAALLSGLSDHLPPPAAAASRVDPDPCSSSHGAVVPSTSAAAAKQARTSGGGGGGVMNFTFFSRPLQQRPSGGETASASASAAATSTVPVESTVVQAATNRLRSTPLFSDQRMAWLHPPKPSPRAAAPPPPPPLAPTTRHRLDTAAATATVAQRLPPSEARAPDAPPPAATATATTSSVCSGNGDRRQLNWRDSHNNQSAEWSASQDELDLDDELAGVHRRSAARSSKRSRTAEVHNLSERRRRDRINEKMRALQELIPNCNKIDKASMLEEAIEYLKTLQLQVQMMSMGTGMFVPPMMLPAAAAAMQHHHMQMQQMAGPMAAAAHFPHLGAAAAMGLAGFGMPAAAQFPCPMFPAAPPMSMFAPPPPPPPFPHAAATAVEQTPSPPGAADAGNAPAVKQA.

Disordered regions lie at residues 1–40 (MLRG…CSAA), 61–99 (GAAN…DTAP), 119–156 (PAAA…SGGG), 169–242 (PLQQ…APTT), 256–312 (AQRL…SQDE), 324–344 (RRSA…NLSE), and 469–505 (PPPP…VKQA). Over residues 23-33 (PLRPPPPPPFQ) the composition is skewed to pro residues. A compositionally biased stretch (polar residues) spans 131 to 144 (CSSSHGAVVPSTSA). Over residues 174–199 (PSGGETASASASAAATSTVPVESTVV) the composition is skewed to low complexity. Over residues 200–212 (QAATNRLRSTPLF) the composition is skewed to polar residues. A compositionally biased stretch (pro residues) spans 222–239 (PPKPSPRAAAPPPPPPLA). Over residues 288–299 (GDRRQLNWRDSH) the composition is skewed to basic and acidic residues. A compositionally biased stretch (polar residues) spans 300–310 (NNQSAEWSASQ). Over residues 324–334 (RRSAARSSKRS) the composition is skewed to basic residues. Residues 335-344 (RTAEVHNLSE) show a composition bias toward basic and acidic residues. The 50-residue stretch at 335-384 (RTAEVHNLSERRRRDRINEKMRALQELIPNCNKIDKASMLEEAIEYLKTL) folds into the bHLH domain. A compositionally biased stretch (low complexity) spans 492-505 (GAADAGNAPAVKQA).

Belongs to the bHLH protein family. In terms of assembly, homodimer and heterodimer with ILI5 or ILI6.

It is found in the nucleus. Functionally, atypical bHLH transcription factor that acts as a negative regulator of grain size. Binds the transcription factor ILI6 and forms a heterodimer of antagonistic bHLH transcription factors that regulates grain length and weight by controlling cell elongation in lemma and palea. May be involved in the control of lamina inclination through brassinosteroid signaling pathway. The protein is Transcription factor APG (APG) of Oryza sativa subsp. japonica (Rice).